The chain runs to 142 residues: Hemoglobin subunit alpha (142 aa).

Residue serine 1 is modified to N-acetylserine. Residues 1–142 (SLSEKNKAAV…VALALADRYR (142 aa)) enclose the Globin domain. Residue histidine 59 coordinates O2. Position 88 (histidine 88) interacts with heme b.

Belongs to the globin family. Heterotetramer of two alpha chains and two beta chains. Red blood cells.

Involved in oxygen transport from gills to the various peripheral tissues. The sequence is that of Hemoglobin subunit alpha (hba) from Pagothenia borchgrevinki (Bald rockcod).